The primary structure comprises 216 residues: Pyrophosphatase PpaX (216 aa).

Aspartate 9 (nucleophile) is an active-site residue.

It belongs to the HAD-like hydrolase superfamily. PpaX family. Mg(2+) is required as a cofactor.

It carries out the reaction diphosphate + H2O = 2 phosphate + H(+). Its function is as follows. Hydrolyzes pyrophosphate formed during P-Ser-HPr dephosphorylation by HPrK/P. Might play a role in controlling the intracellular pyrophosphate pool. This is Pyrophosphatase PpaX from Bacillus cereus (strain B4264).